A 252-amino-acid chain; its full sequence is Glucosamine-6-phosphate deaminase (252 aa).

The Proton acceptor; for enolization step role is filled by Asp-64. Asn-130 acts as the For ring-opening step in catalysis. The Proton acceptor; for ring-opening step role is filled by His-132. Glu-137 functions as the For ring-opening step in the catalytic mechanism.

It belongs to the glucosamine/galactosamine-6-phosphate isomerase family. NagB subfamily.

The catalysed reaction is alpha-D-glucosamine 6-phosphate + H2O = beta-D-fructose 6-phosphate + NH4(+). It participates in amino-sugar metabolism; N-acetylneuraminate degradation; D-fructose 6-phosphate from N-acetylneuraminate: step 5/5. Catalyzes the reversible isomerization-deamination of glucosamine 6-phosphate (GlcN6P) to form fructose 6-phosphate (Fru6P) and ammonium ion. The sequence is that of Glucosamine-6-phosphate deaminase from Exiguobacterium sibiricum (strain DSM 17290 / CCUG 55495 / CIP 109462 / JCM 13490 / 255-15).